Consider the following 396-residue polypeptide: Phosphoglycerate kinase (396 aa).

Residues Asp21–Asn23, Arg36, His59–Arg62, Arg118, and Arg151 each bind substrate. ATP-binding positions include Lys201, Gly292, Glu323, and Gly349–Ser352.

This sequence belongs to the phosphoglycerate kinase family. In terms of assembly, monomer.

Its subcellular location is the cytoplasm. It catalyses the reaction (2R)-3-phosphoglycerate + ATP = (2R)-3-phospho-glyceroyl phosphate + ADP. It participates in carbohydrate degradation; glycolysis; pyruvate from D-glyceraldehyde 3-phosphate: step 2/5. This Leptospira biflexa serovar Patoc (strain Patoc 1 / Ames) protein is Phosphoglycerate kinase.